Reading from the N-terminus, the 553-residue chain is Coiled-coil domain-containing protein 85A (553 aa).

Residues 1 to 28 (MSKAAGGAAAAAAAAESCSPAPAGSSAA) are compositionally biased toward low complexity. A disordered region spans residues 1-37 (MSKAAGGAAAAAAAAESCSPAPAGSSAAPPAPVEDLS). 2 coiled-coil regions span residues 43-109 (ELLQ…RDLC) and 137-169 (MHKEVALYLQKLKDLEVKQEEVVKENMELKELC). 3 disordered regions span residues 203 to 414 (YVRD…GMNE), 433 to 461 (ENRMLPQASQNRRQPPTRNSSNMEKGWGS), and 491 to 518 (SGADGSNSSPNSAASFSGHATPSQQPEP). Over residues 209-220 (DGSSTSSTGSTD) the composition is skewed to low complexity. Residues 236–260 (HLQKPRSEGSPEHSKHRSASPEHPQ) are compositionally biased toward basic and acidic residues. Positions 376–389 (GGSGGSGGSGGGSR) are enriched in gly residues. The span at 391-403 (GTLRRQAQEDGSP) shows a compositional bias: basic and acidic residues. Residues 412–443 (MNESTLSYVRQLEARVRQLEEENRMLPQASQN) are a coiled coil. Positions 439-455 (QASQNRRQPPTRNSSNM) are enriched in polar residues. Residues 491 to 508 (SGADGSNSSPNSAASFSG) are compositionally biased toward low complexity. The residue at position 541 (Arg541) is an Asymmetric dimethylarginine.

This sequence belongs to the CCDC85 family. As to quaternary structure, may interact with ARVCF; CTNND1; CTNND2 and PKP4.

Its subcellular location is the cell junction. The protein resides in the adherens junction. Functionally, may play a role in cell-cell adhesion and epithelium development through its interaction with proteins of the beta-catenin family. This chain is Coiled-coil domain-containing protein 85A (CCDC85A), found in Homo sapiens (Human).